Consider the following 390-residue polypeptide: Putative glutamate--cysteine ligase 2 (390 aa).

It belongs to the glutamate--cysteine ligase type 2 family. YbdK subfamily.

It catalyses the reaction L-cysteine + L-glutamate + ATP = gamma-L-glutamyl-L-cysteine + ADP + phosphate + H(+). Functionally, ATP-dependent carboxylate-amine ligase which exhibits weak glutamate--cysteine ligase activity. The polypeptide is Putative glutamate--cysteine ligase 2 (Chloroflexus aurantiacus (strain ATCC 29366 / DSM 635 / J-10-fl)).